Consider the following 545-residue polypeptide: Glucose-6-phosphate isomerase (545 aa).

The active-site Proton donor is the Glu351. Catalysis depends on residues His382 and Lys510.

Belongs to the GPI family.

The protein resides in the cytoplasm. The enzyme catalyses alpha-D-glucose 6-phosphate = beta-D-fructose 6-phosphate. It functions in the pathway carbohydrate biosynthesis; gluconeogenesis. Its pathway is carbohydrate degradation; glycolysis; D-glyceraldehyde 3-phosphate and glycerone phosphate from D-glucose: step 2/4. In terms of biological role, catalyzes the reversible isomerization of glucose-6-phosphate to fructose-6-phosphate. This chain is Glucose-6-phosphate isomerase, found in Helicobacter pylori (strain ATCC 700392 / 26695) (Campylobacter pylori).